The chain runs to 561 residues: Nucleoprotein (561 aa).

Positions 53–237 (MRKDKRSEAD…ITQEPAQINI (185 aa)) are binding site for the cap structure m7GTP. Residues D380 and E382 each contribute to the Mn(2+) site. Zn(2+) is bound by residues E390, C497, H500, and C521. Position 525 (D525) interacts with Mn(2+).

It belongs to the arenaviridae nucleocapsid protein family. In terms of assembly, homomultimerizes to form the nucleocapsid. Binds to viral genomic RNA. Interacts with glycoprotein G2. Interacts with protein Z; this interaction probably directs the encapsidated genome to budding sites. Interacts with protein L; this interaction does not interfere with Z-L interaction. Interacts with host IKBKE (via Protein kinase domain); the interaction inhibits IKBKE kinase activity.

The protein resides in the virion. The protein localises to the host cytoplasm. Its function is as follows. Encapsidates the genome, protecting it from nucleases. The encapsidated genomic RNA is termed the nucleocapsid (NC). Serves as template for viral transcription and replication. The increased presence of protein N in host cell does not seem to trigger the switch from transcription to replication as observed in other negative strain RNA viruses. Through the interaction with host IKBKE, strongly inhibits the phosphorylation and nuclear translocation of host IRF3, a protein involved in interferon activation pathway, leading to the inhibition of interferon-beta and IRF3-dependent promoters activation. Also encodes a functional 3'-5' exoribonuclease that degrades preferentially dsRNA substrates and thereby participates in the suppression of interferon induction. This chain is Nucleoprotein, found in Allpahuayo mammarenavirus (isolate Rat/Peru/CLHP-2472/1997) (ALLV).